The sequence spans 198 residues: Probable thymidylate kinase (198 aa).

9 to 16 is a binding site for ATP; it reads GIDGSGKT.

Belongs to the thymidylate kinase family.

The enzyme catalyses dTMP + ATP = dTDP + ADP. The chain is Probable thymidylate kinase from Methanococcus vannielii (strain ATCC 35089 / DSM 1224 / JCM 13029 / OCM 148 / SB).